The sequence spans 256 residues: RNA polymerase sigma factor SigI1 (256 aa).

The short motif at 67 to 80 (DEFSIALSAFNEAI) is the Polymerase core binding element. Positions 205–224 (RNELKKKAKVHGRTIGNNRK) form a DNA-binding region, H-T-H motif.

This sequence belongs to the sigma-70 factor family. SigI subfamily. As to quaternary structure, interacts with RsgI1.

Its subcellular location is the cytoplasm. Negatively regulated by the anti-sigma-I factor RsgI1. Binding of the polysaccharide substrate to RsgI1 may lead to the release and activation of SigI1. Sigma factors are initiation factors that promote the attachment of RNA polymerase to specific initiation sites and are then released. This sigma factor is involved in regulation of cellulosomal genes via an external polysaccharide-sensing mechanism. SigI1 promotes transcription from sigI1 and celS promoters. The protein is RNA polymerase sigma factor SigI1 of Acetivibrio thermocellus (strain ATCC 27405 / DSM 1237 / JCM 9322 / NBRC 103400 / NCIMB 10682 / NRRL B-4536 / VPI 7372) (Clostridium thermocellum).